A 327-amino-acid chain; its full sequence is Zinc transport protein ZntB (327 aa).

The Cytoplasmic portion of the chain corresponds to 1–273 (MEAIKGSEVN…ARRTYTMSLM (273 aa)). A helical membrane pass occupies residues 274–294 (AMVFLPSTFLTGLFGVNLGGI). The Periplasmic segment spans residues 295-300 (PGGAWH). Residues 301–321 (FGFSMFCILLVVLIGGVTLWL) traverse the membrane as a helical segment. The Cytoplasmic segment spans residues 322–327 (HRSKWL).

This sequence belongs to the CorA metal ion transporter (MIT) (TC 1.A.35) family.

The protein resides in the cell inner membrane. It catalyses the reaction Zn(2+)(out) + H(+)(out) = Zn(2+)(in) + H(+)(in). Functionally, zinc transporter. Acts as a Zn(2+):proton symporter, which likely mediates zinc ion uptake. The chain is Zinc transport protein ZntB from Citrobacter koseri (strain ATCC BAA-895 / CDC 4225-83 / SGSC4696).